Reading from the N-terminus, the 231-residue chain is uncharacterized protein (231 aa).

In terms of domain architecture, Response regulatory spans 4–116 (RILVVEDDED…ELHARVIAQL (113 aa)). D52 bears the 4-aspartylphosphate mark. A DNA-binding region (ompR/PhoB-type) is located at residues 129–230 (EETFLIGGKL…EWGRGYRFGA (102 aa)).

In terms of processing, phosphorylated by YrkQ.

Its subcellular location is the cytoplasm. Its function is as follows. Member of the two-component regulatory system YrkQ/YrkP. This is an uncharacterized protein from Bacillus subtilis (strain 168).